The sequence spans 146 residues: Hemoglobin subunit beta-2 (146 aa).

One can recognise a Globin domain in the interval 2–146; the sequence is EWTDFERATI…VVSALGRQYH (145 aa). His63 and His92 together coordinate heme b.

It belongs to the globin family. As to quaternary structure, hb3 is a heterotetramer of two alpha-2 chains and two beta-2 chains. In terms of tissue distribution, red blood cells.

Its function is as follows. Involved in oxygen transport from gills to the various peripheral tissues. The sequence is that of Hemoglobin subunit beta-2 (hbb2) from Anarhichas minor (Arctic spotted wolffish).